Reading from the N-terminus, the 253-residue chain is Vitamin B12 import ATP-binding protein BtuD (253 aa).

The region spanning 1-236 (MTNQLMALNQ…NTLSRVFAAD (236 aa)) is the ABC transporter domain. 34 to 41 (GPNGSGKS) lines the ATP pocket.

The protein belongs to the ABC transporter superfamily. Vitamin B12 importer (TC 3.A.1.13.1) family. As to quaternary structure, the complex is composed of two ATP-binding proteins (BtuD), two transmembrane proteins (BtuC) and a solute-binding protein (BtuF).

It localises to the cell inner membrane. It catalyses the reaction an R-cob(III)alamin(out) + ATP + H2O = an R-cob(III)alamin(in) + ADP + phosphate + H(+). Functionally, part of the ABC transporter complex BtuCDF involved in vitamin B12 import. Responsible for energy coupling to the transport system. The polypeptide is Vitamin B12 import ATP-binding protein BtuD (Photorhabdus laumondii subsp. laumondii (strain DSM 15139 / CIP 105565 / TT01) (Photorhabdus luminescens subsp. laumondii)).